The following is a 200-amino-acid chain: Small ribosomal subunit protein uS4 (200 aa).

Residues 106–170 form the S4 RNA-binding domain; sequence RRLQTIVFKK…SPIANELHPI (65 aa). The interval 178-200 is disordered; it reads AERVKEEAEKEAAASEDGGEQDE. The span at 179 to 190 shows a compositional bias: basic and acidic residues; that stretch reads ERVKEEAEKEAA.

This sequence belongs to the universal ribosomal protein uS4 family. As to quaternary structure, part of the 30S ribosomal subunit. Contacts protein S5. The interaction surface between S4 and S5 is involved in control of translational fidelity.

In terms of biological role, one of the primary rRNA binding proteins, it binds directly to 16S rRNA where it nucleates assembly of the body of the 30S subunit. Its function is as follows. With S5 and S12 plays an important role in translational accuracy. In Thermoplasma volcanium (strain ATCC 51530 / DSM 4299 / JCM 9571 / NBRC 15438 / GSS1), this protein is Small ribosomal subunit protein uS4.